The primary structure comprises 882 residues: Formin-like protein 9 (882 aa).

Residues 1 to 19 (MGMAMRCVLVLFSVSPVLL) form the signal peptide. A disordered region spans residues 67 to 92 (SRGRRHKRYSEAPAPAPAPVPAHQAR). A helical membrane pass occupies residues 138–158 (IVALGVVGLCLVVLGVVIAAF). 3 disordered regions span residues 178 to 202 (RHGSRDQRSPAATRKVSSHPSPDPL), 293 to 316 (THDSPSDSSYQSLSPDCTSRLSPK), and 401 to 471 (TMTN…PLPR). Positions 298 to 308 (SDSSYQSLSPD) are enriched in low complexity. Residues 427–441 (KPAPPPPPQKNPPPN) are compositionally biased toward pro residues. Residues 462-882 (VGKDGSPLPR…QTLNLVLPLK (421 aa)) enclose the FH2 domain.

The protein belongs to the formin-like family. Class-I subfamily.

The protein localises to the membrane. This is Formin-like protein 9 (FH9) from Oryza sativa subsp. japonica (Rice).